A 246-amino-acid polypeptide reads, in one-letter code: Ribonuclease PH (246 aa).

Phosphate is bound by residues arginine 91 and 129-131 (GTR).

This sequence belongs to the RNase PH family. In terms of assembly, homohexameric ring arranged as a trimer of dimers.

It carries out the reaction tRNA(n+1) + phosphate = tRNA(n) + a ribonucleoside 5'-diphosphate. Phosphorolytic 3'-5' exoribonuclease that plays an important role in tRNA 3'-end maturation. Removes nucleotide residues following the 3'-CCA terminus of tRNAs; can also add nucleotides to the ends of RNA molecules by using nucleoside diphosphates as substrates, but this may not be physiologically important. Probably plays a role in initiation of 16S rRNA degradation (leading to ribosome degradation) during starvation. In Burkholderia orbicola (strain MC0-3), this protein is Ribonuclease PH.